Reading from the N-terminus, the 634-residue chain is Chaperone protein HtpG (634 aa).

The a; substrate-binding stretch occupies residues 1-342; the sequence is MSVETQKETL…SNDLSLNVSR (342 aa). The segment at 343–559 is b; the sequence is EILQKDPVID…EQDLGLQMRQ (217 aa). The interval 560–634 is c; that stretch reads ILEASGQKVP…LNKLLVELSA (75 aa).

It belongs to the heat shock protein 90 family. Homodimer.

It localises to the cytoplasm. In terms of biological role, molecular chaperone. Has ATPase activity. The sequence is that of Chaperone protein HtpG from Pseudomonas paraeruginosa (strain DSM 24068 / PA7) (Pseudomonas aeruginosa (strain PA7)).